The sequence spans 129 residues: Phosphoribosyl-AMP cyclohydrolase (129 aa).

Asp82 is a binding site for Mg(2+). Position 83 (Cys83) interacts with Zn(2+). Mg(2+) is bound by residues Asp84 and Asp86. 2 residues coordinate Zn(2+): Cys99 and Cys106.

It belongs to the PRA-CH family. As to quaternary structure, homodimer. The cofactor is Mg(2+). It depends on Zn(2+) as a cofactor.

It is found in the cytoplasm. The enzyme catalyses 1-(5-phospho-beta-D-ribosyl)-5'-AMP + H2O = 1-(5-phospho-beta-D-ribosyl)-5-[(5-phospho-beta-D-ribosylamino)methylideneamino]imidazole-4-carboxamide. Its pathway is amino-acid biosynthesis; L-histidine biosynthesis; L-histidine from 5-phospho-alpha-D-ribose 1-diphosphate: step 3/9. Its function is as follows. Catalyzes the hydrolysis of the adenine ring of phosphoribosyl-AMP. The chain is Phosphoribosyl-AMP cyclohydrolase from Methanosarcina barkeri (strain Fusaro / DSM 804).